We begin with the raw amino-acid sequence, 51 residues long: Large ribosomal subunit protein bL33 (51 aa).

The protein belongs to the bacterial ribosomal protein bL33 family.

The protein is Large ribosomal subunit protein bL33 of Vesicomyosocius okutanii subsp. Calyptogena okutanii (strain HA).